The following is a 656-amino-acid chain: Translation factor GUF1, mitochondrial (656 aa).

The N-terminal 28 residues, 1–28 (MWKGLLQSTRAAWRGPCVRAPRLPFFRR), are a transit peptide targeting the mitochondrion. The region spanning 55–235 (ERYRNFSIVA…NVIENIPGPD (181 aa)) is the tr-type G domain. GTP contacts are provided by residues 64–71 (AHVDHGKS), 128–132 (DTPGH), and 182–185 (NKID).

It belongs to the TRAFAC class translation factor GTPase superfamily. Classic translation factor GTPase family. LepA subfamily.

It localises to the mitochondrion inner membrane. It carries out the reaction GTP + H2O = GDP + phosphate + H(+). Its function is as follows. Promotes mitochondrial protein synthesis. May act as a fidelity factor of the translation reaction, by catalyzing a one-codon backward translocation of tRNAs on improperly translocated ribosomes. Binds to mitochondrial ribosomes in a GTP-dependent manner. The chain is Translation factor GUF1, mitochondrial from Yarrowia lipolytica (strain CLIB 122 / E 150) (Yeast).